The following is a 419-amino-acid chain: MSNKQITAVRGTTDWFDQAMILFNAISHKIIALSDLYTFQRIKTPVFEHAELFSRNLEHSDIVKKELYQLIDRSERKLALRPEGTASIIRAVNEHKLLDQNPWPLKLYYLEPMFRYERPQKGRMREFYQYGIELVGELDQLDYLQTILFAKKILDTFNFDCVLNINWLGNFASRKCWVEQLNQYFKQYQDQLSELSVSRLDSYGVLRILDDKNESKKDFVRSAPTIDQFISLEEQTQFKQLLEQLDQLGIKYKYNSSLVRGLDYYSELVFEFILANNDQAQSTLIGGGCYQNLIAELTNKPLKAIGFALSIERFISYLDDKTKDSLINQDQKPRYLLINLVPNKELATLNLSQELINHNYQVYYQHKLNKVDKAIKYALRAKFTHLIIMGNDEWSKQTMTIKDLSSQTQQTIKYKEFIK.

Belongs to the class-II aminoacyl-tRNA synthetase family. As to quaternary structure, homodimer.

The protein resides in the cytoplasm. It carries out the reaction tRNA(His) + L-histidine + ATP = L-histidyl-tRNA(His) + AMP + diphosphate + H(+). This Mycoplasmoides gallisepticum (strain R(low / passage 15 / clone 2)) (Mycoplasma gallisepticum) protein is Histidine--tRNA ligase.